The following is a 157-amino-acid chain: Protein Smg (157 aa).

Belongs to the Smg family.

This chain is Protein Smg, found in Serratia proteamaculans (strain 568).